The chain runs to 391 residues: Pyruvate dehydrogenase E1 component subunit alpha, mitochondrial (391 aa).

A mitochondrion-targeting transit peptide spans 1 to 26; it reads MALSTSRAINHIMKPLSAAVCATRRL. His-92, Tyr-118, Arg-119, Gly-167, Val-169, Asp-198, Gly-199, Ala-200, Asn-227, and Tyr-229 together coordinate pyruvate. Positions 118, 119, 167, 169, 198, 199, 200, and 227 each coordinate thiamine diphosphate. Position 198 (Asp-198) interacts with Mg(2+). Residues Asn-227 and Tyr-229 each coordinate Mg(2+). Residue His-293 coordinates thiamine diphosphate. The tract at residues 294–313 is disordered; that stretch reads SMSDPGSTYRTRDEISGVRQ. Positions 303 to 313 are enriched in basic and acidic residues; it reads RTRDEISGVRQ.

As to quaternary structure, tetramer of 2 alpha and 2 beta subunits. Thiamine diphosphate serves as cofactor. Mg(2+) is required as a cofactor.

It localises to the mitochondrion matrix. The catalysed reaction is N(6)-[(R)-lipoyl]-L-lysyl-[protein] + pyruvate + H(+) = N(6)-[(R)-S(8)-acetyldihydrolipoyl]-L-lysyl-[protein] + CO2. E1 activity is regulated by phosphorylation (inactivation) and dephosphorylation (activation) of the alpha subunit. In terms of biological role, the pyruvate dehydrogenase complex catalyzes the overall conversion of pyruvate to acetyl-CoA and CO(2). It contains multiple copies of three enzymatic components: pyruvate dehydrogenase (E1), dihydrolipoamide acetyltransferase (E2) and lipoamide dehydrogenase (E3). This is Pyruvate dehydrogenase E1 component subunit alpha, mitochondrial from Solanum tuberosum (Potato).